The following is a 667-amino-acid chain: Interleukin-17 receptor E (667 aa).

The N-terminal stretch at 1-23 is a signal peptide; sequence MGSSRLAALLLPLLLIVIDLSDS. Over 24–454 the chain is Extracellular; the sequence is AGIGFRHLPH…LLCPDVSYRH (431 aa). Residues 126-174 form a disordered region; the sequence is LPRRHLSEKSHHISIPSPDISHKGLRSKRTQPSDPETWESLPRLDSQRH. N-linked (GlcNAc...) asparagine glycans are attached at residues N318, N347, and N364. Residues 455 to 475 form a helical membrane-spanning segment; the sequence is LGLLILALLALLTLLGVVLAL. Topologically, residues 476-667 are cytoplasmic; sequence TCRRPQSGPG…REAARLADLG (192 aa). Positions 487 to 624 constitute an SEFIR domain; sequence ARPVLLLHAA…LLRDLPRLLR (138 aa).

Forms heterodimers with IL17RA; the heterodimer binds IL17C. Predominantly expressed in mucosal tissues with high levels in keratinocytes and colon epithelial cells. Very low expression in dermal fibroblasts. Expressed in various tumor cell lines.

It localises to the cell membrane. It is found in the cytoplasm. Its subcellular location is the secreted. Functionally, specific functional receptor for IL17C. May be signaling through the NF-kappa-B and MAPK pathways. May require TRAF3IP2 /ACT1 for signaling. May be a crucial regulator in innate immunity to bacterial pathogens. Isoform 2 and isoform 4 may be either cytoplasmic inactive or dominant active forms. Isoform 3 and isoform 5 may act as soluble decoy receptors. This Homo sapiens (Human) protein is Interleukin-17 receptor E (IL17RE).